The following is a 291-amino-acid chain: Bis(5'-nucleosyl)-tetraphosphatase, symmetrical (291 aa).

This sequence belongs to the Ap4A hydrolase family.

It catalyses the reaction P(1),P(4)-bis(5'-adenosyl) tetraphosphate + H2O = 2 ADP + 2 H(+). Functionally, hydrolyzes diadenosine 5',5'''-P1,P4-tetraphosphate to yield ADP. The protein is Bis(5'-nucleosyl)-tetraphosphatase, symmetrical of Coxiella burnetii (strain CbuK_Q154) (Coxiella burnetii (strain Q154)).